The chain runs to 1135 residues: Eukaryotic translation initiation factor 3 subunit A (1135 aa).

In terms of domain architecture, PCI spans 319 to 501 (LQRMAAHVLL…NSIYFGTDLT (183 aa)). Composition is skewed to basic and acidic residues over residues 588-623 (QNNAREEEEARRQEEESRKAKLAEQKRLEQEQEERE) and 829-899 (AAEE…RGGD). 2 disordered regions span residues 588–631 (QNNA…QNEI) and 829–1135 (AAEE…VKRR). At Ser-908 the chain carries Phosphoserine. 4 stretches are compositionally biased toward basic and acidic residues: residues 920–971 (ERNE…EPDS), 985–1045 (SRDD…EPQR), 1053–1081 (DAPRNADRENRRPAGERRDRDVRETRGDQ), and 1104–1125 (AREEKPASKRDQPQEKENKAAD).

Belongs to the eIF-3 subunit A family. In terms of assembly, component of the eukaryotic translation initiation factor 3 (eIF-3) complex. The eIF-3 complex interacts with pix.

The protein localises to the cytoplasm. Functionally, RNA-binding component of the eukaryotic translation initiation factor 3 (eIF-3) complex, which is involved in protein synthesis of a specialized repertoire of mRNAs and, together with other initiation factors, stimulates binding of mRNA and methionyl-tRNAi to the 40S ribosome. The eIF-3 complex specifically targets and initiates translation of a subset of mRNAs involved in cell proliferation. This is Eukaryotic translation initiation factor 3 subunit A from Drosophila erecta (Fruit fly).